A 212-amino-acid polypeptide reads, in one-letter code: Small ribosomal subunit protein eS1 (212 aa).

The protein belongs to the eukaryotic ribosomal protein eS1 family.

The polypeptide is Small ribosomal subunit protein eS1 (Haloquadratum walsbyi (strain DSM 16790 / HBSQ001)).